The chain runs to 122 residues: Small ribosomal subunit protein bS16 (122 aa).

The segment at 87 to 122 is disordered; it reads VGKAKQAEARKAGAKNVAKQAAEAKAEETPADNTEA.

The protein belongs to the bacterial ribosomal protein bS16 family.

This Prochlorococcus marinus (strain MIT 9303) protein is Small ribosomal subunit protein bS16.